Consider the following 327-residue polypeptide: 4-hydroxythreonine-4-phosphate dehydrogenase (327 aa).

Residues His134 and Thr135 each contribute to the substrate site. A divalent metal cation-binding residues include His164, His209, and His264. Residues Lys272, Asn281, and Arg290 each coordinate substrate.

The protein belongs to the PdxA family. In terms of assembly, homodimer. It depends on Zn(2+) as a cofactor. The cofactor is Mg(2+). Co(2+) serves as cofactor.

The protein localises to the cytoplasm. The enzyme catalyses 4-(phosphooxy)-L-threonine + NAD(+) = 3-amino-2-oxopropyl phosphate + CO2 + NADH. It participates in cofactor biosynthesis; pyridoxine 5'-phosphate biosynthesis; pyridoxine 5'-phosphate from D-erythrose 4-phosphate: step 4/5. In terms of biological role, catalyzes the NAD(P)-dependent oxidation of 4-(phosphooxy)-L-threonine (HTP) into 2-amino-3-oxo-4-(phosphooxy)butyric acid which spontaneously decarboxylates to form 3-amino-2-oxopropyl phosphate (AHAP). This is 4-hydroxythreonine-4-phosphate dehydrogenase from Shewanella frigidimarina (strain NCIMB 400).